The chain runs to 396 residues: Flap endonuclease 1 (396 aa).

The segment at 1-105 (MGIHGLTKLL…DQLAQRTERR (105 aa)) is N-domain. Aspartate 34 serves as a coordination point for Mg(2+). Arginine 71 contributes to the DNA binding site. Mg(2+)-binding residues include aspartate 87, glutamate 159, glutamate 161, aspartate 180, and aspartate 182. Positions 123-254 (AIEKYSKRSV…VRALQMIKKH (132 aa)) are I-domain. Glutamate 159 serves as a coordination point for DNA. Glycine 232 and aspartate 234 together coordinate DNA. Mg(2+) is bound at residue aspartate 234. Positions 338–346 (NQGRLESFF) are interaction with PCNA. The interval 341–396 (RLESFFTSLPKPATADKAKPKEDDKKRKAGAAAGGKDAKGGAAAKKGKFGVGGGKK) is disordered. The segment covering 354–366 (TADKAKPKEDDKK) has biased composition (basic and acidic residues). Low complexity predominate over residues 370 to 384 (GAAAGGKDAKGGAAA).

The protein belongs to the XPG/RAD2 endonuclease family. FEN1 subfamily. Interacts with PCNA. Three molecules of FEN1 bind to one PCNA trimer with each molecule binding to one PCNA monomer. PCNA stimulates the nuclease activity without altering cleavage specificity. It depends on Mg(2+) as a cofactor. Post-translationally, phosphorylated. Phosphorylation upon DNA damage induces relocalization to the nuclear plasma.

The protein localises to the nucleus. It localises to the nucleolus. The protein resides in the nucleoplasm. Its subcellular location is the mitochondrion. Its function is as follows. Structure-specific nuclease with 5'-flap endonuclease and 5'-3' exonuclease activities involved in DNA replication and repair. During DNA replication, cleaves the 5'-overhanging flap structure that is generated by displacement synthesis when DNA polymerase encounters the 5'-end of a downstream Okazaki fragment. It enters the flap from the 5'-end and then tracks to cleave the flap base, leaving a nick for ligation. Also involved in the long patch base excision repair (LP-BER) pathway, by cleaving within the apurinic/apyrimidinic (AP) site-terminated flap. Acts as a genome stabilization factor that prevents flaps from equilibrating into structures that lead to duplications and deletions. Also possesses 5'-3' exonuclease activity on nicked or gapped double-stranded DNA, and exhibits RNase H activity. Also involved in replication and repair of rDNA and in repairing mitochondrial DNA. The protein is Flap endonuclease 1 of Chlamydomonas reinhardtii (Chlamydomonas smithii).